Reading from the N-terminus, the 310-residue chain is tRNA-cytidine(32) 2-sulfurtransferase (310 aa).

Positions 48 to 53 match the PP-loop motif motif; the sequence is SGGKDS. [4Fe-4S] cluster-binding residues include C123, C126, and C214.

It belongs to the TtcA family. Homodimer. The cofactor is Mg(2+). [4Fe-4S] cluster is required as a cofactor.

It is found in the cytoplasm. The enzyme catalyses cytidine(32) in tRNA + S-sulfanyl-L-cysteinyl-[cysteine desulfurase] + AH2 + ATP = 2-thiocytidine(32) in tRNA + L-cysteinyl-[cysteine desulfurase] + A + AMP + diphosphate + H(+). The protein operates within tRNA modification. Functionally, catalyzes the ATP-dependent 2-thiolation of cytidine in position 32 of tRNA, to form 2-thiocytidine (s(2)C32). The sulfur atoms are provided by the cysteine/cysteine desulfurase (IscS) system. The polypeptide is tRNA-cytidine(32) 2-sulfurtransferase (Vibrio vulnificus (strain CMCP6)).